The following is a 352-amino-acid chain: MGSSNKKKKEKKKDFNKAKLKVGKAKAKAANFTDTSFKSKSIVVNQHTLAALDGVDLVGLFKQHLNQAINSKSDKLRQEALVQLTKDLSSKPIFNPVGVPNLLTKLLPLITDSVANVRTNFLKLLRALPPSDVAPHVEKILMYIRGGMTHLSTEIRSDTLSVLDWLIDVCPDETVSCPGGWLKTMNSFSSMLGWNPSVASTLSVKGWTSATKTSLNKVSKKNGEAQAKQITTLAKFLEAGFRPETPLPYDEQRYWDSIYRMPTTPNPFAYLNLWGAQRDEDGEMYPDRISRQQVFERKWRAAIKTGVMGAKQEGGVIGRAASVLDKVLRTAEEGGKKVVEEQKIEEVEEAEA.

Belongs to the IPI1/TEX10 family. In terms of assembly, component of the RIX1 complex, composed of rrm-9/ipi1, rix1/ipi2 and ipi3 in a 1:2:2 stoichiometry. The complex interacts (via rix1) with mdn1 (via its hexameric AAA ATPase ring) and the pre-60S ribosome particles.

The protein localises to the nucleus. Its function is as follows. Component of the RIX1 complex required for processing of ITS2 sequences from 35S pre-rRNA. This chain is Pre-rRNA-processing protein ipi1 (rrm-9), found in Neurospora crassa (strain ATCC 24698 / 74-OR23-1A / CBS 708.71 / DSM 1257 / FGSC 987).